A 195-amino-acid chain; its full sequence is Probable molybdenum cofactor guanylyltransferase (195 aa).

Residues 6-8 (LAG), lysine 18, aspartate 67, and aspartate 93 contribute to the GTP site. Residue aspartate 93 participates in Mg(2+) binding.

It belongs to the MobA family. It depends on Mg(2+) as a cofactor.

It localises to the cytoplasm. It carries out the reaction Mo-molybdopterin + GTP + H(+) = Mo-molybdopterin guanine dinucleotide + diphosphate. In terms of biological role, transfers a GMP moiety from GTP to Mo-molybdopterin (Mo-MPT) cofactor (Moco or molybdenum cofactor) to form Mo-molybdopterin guanine dinucleotide (Mo-MGD) cofactor. This Thermococcus sibiricus (strain DSM 12597 / MM 739) protein is Probable molybdenum cofactor guanylyltransferase.